The chain runs to 412 residues: Adenosine receptor A2a (412 aa).

Over 1–7 (MPTVGSL) the chain is Extracellular. The chain crosses the membrane as a helical span at residues 8-32 (VYIMVELAIALLAILGNMLVCWAVW). Residues 33–42 (LNSNLQNVTN) are Cytoplasmic-facing. The chain crosses the membrane as a helical span at residues 43 to 66 (YFVVSLAAADIAVGVLAIPFAITI). Residues 67-77 (STGFCAACHGC) lie on the Extracellular side of the membrane. 3 cysteine pairs are disulfide-bonded: C71–C159, C74–C146, and C77–C166. A helical membrane pass occupies residues 78–100 (LFIACFVLVLTQSSIFSLLAIAI). The Cytoplasmic portion of the chain corresponds to 101–120 (DRYIAIRIPLRYNGLVTGTR). A helical membrane pass occupies residues 121–143 (AKGVIAVCWVLSFAIGLTPMLGW). The Extracellular portion of the chain corresponds to 144 to 173 (NNCHHWGEGENQSQGCGEGQVACLFEDVVP). The N-linked (GlcNAc...) asparagine glycan is linked to N154. An adenosine-binding site is contributed by E169. Residues 174-198 (MNYMVYYNFFACVLVPLLLMLGVYL) traverse the membrane as a helical segment. Residues 199–234 (RIFLAARRQLKQMETQPLPGERARSTLQKEVHAAKS) lie on the Cytoplasmic side of the membrane. A helical membrane pass occupies residues 235-258 (LAIIVGLFALCWLPLHIINCFTFF). N253 is a binding site for adenosine. An intrachain disulfide couples C259 to C262. The Extracellular portion of the chain corresponds to 259–266 (CPECPHAP). The helical transmembrane segment at 267–290 (LWLMYPAIILSHFNSVVNPFIYAY) threads the bilayer. Residues S277 and H278 each coordinate adenosine. Topologically, residues 291-412 (RIREFRHTFH…PLAQDGAGVS (122 aa)) are cytoplasmic. Residues 368–412 (RASARESPGDTGLPDVELLSHELHGASPESPGLEGPLAQDGAGVS) are disordered.

The protein belongs to the G-protein coupled receptor 1 family. Interacts (via cytoplasmic C-terminal domain) with USP4; the interaction is direct. May interact with DRD4. Interacts with NECAB2. Interacts (via cytoplasmic C-terminal domain) with GAS2L2; interaction enhances receptor-mediated adenylyl cyclase activity. In terms of processing, ubiquitinated. Deubiquitinated by USP4; leading to stabilization and expression at the cell surface.

The protein resides in the cell membrane. In terms of biological role, receptor for adenosine. The activity of this receptor is mediated by G proteins which activate adenylyl cyclase. The polypeptide is Adenosine receptor A2a (ADORA2A) (Equus caballus (Horse)).